The sequence spans 419 residues: Thymidine phosphorylase (419 aa).

It belongs to the thymidine/pyrimidine-nucleoside phosphorylase family. As to quaternary structure, homodimer.

The catalysed reaction is thymidine + phosphate = 2-deoxy-alpha-D-ribose 1-phosphate + thymine. In terms of biological role, the enzymes which catalyze the reversible phosphorolysis of pyrimidine nucleosides are involved in the degradation of these compounds and in their utilization as carbon and energy sources, or in the rescue of pyrimidine bases for nucleotide synthesis. The polypeptide is Thymidine phosphorylase (deoA) (Mycoplasmoides pirum (Mycoplasma pirum)).